We begin with the raw amino-acid sequence, 624 residues long: Laccase-1 (624 aa).

The first 20 residues, methionine 1–serine 20, serve as a signal peptide directing secretion. 2 consecutive Plastocyanin-like domains span residues threonine 69–asparagine 183 and aspartate 195–tyrosine 355. Histidine 117, histidine 119, histidine 162, and histidine 164 together coordinate Cu cation. A disulfide bond links cysteine 138 and cysteine 578. N-linked (GlcNAc...) asparagine glycans are attached at residues asparagine 242, asparagine 320, and asparagine 430. In terms of domain architecture, Plastocyanin-like 3 spans isoleucine 469 to proline 562. Positions 480, 483, and 485 each coordinate Cu cation. Asparagine 503 carries N-linked (GlcNAc...) asparagine glycosylation. Positions 543, 544, 545, and 549 each coordinate Cu cation. The interval aspartate 582–serine 603 is disordered. The segment covering serine 592–serine 603 has biased composition (low complexity).

This sequence belongs to the multicopper oxidase family. It depends on Cu cation as a cofactor.

The protein resides in the secreted. It is found in the cell wall. It carries out the reaction 4 hydroquinone + O2 = 4 benzosemiquinone + 2 H2O. Its function is as follows. Laccase that catalyzes the oxidation of certain aromatic compounds, including L-dopa, to quinones, which then polymerize to melanin. Able to oxidize a wide variety of aromatic diphenol and diamino groups in the ortho, meta, and para positions but not monophenolic groups such as in phenol, tyramine, or tyrosine. Plays an important role in virulence. Plays a role in dissemination to extrapulmonary sites but is not involved in pulmonary growth or in elicitation of cellular immune responses in the lung. The protein is Laccase-1 (LAC1) of Cryptococcus neoformans var. grubii serotype A (strain H99 / ATCC 208821 / CBS 10515 / FGSC 9487) (Filobasidiella neoformans var. grubii).